A 378-amino-acid chain; its full sequence is 1-acyl-sn-glycerol-3-phosphate acyltransferase delta (378 aa).

The chain crosses the membrane as a helical span at residues 11 to 31 (FLCHLVFCYVFIASGLIVNAI). Positions 96–101 (HKFEID) match the HXXXXD motif motif. The next 3 helical transmembrane spans lie at 125–145 (ELAY…IFCT), 311–331 (WLFW…SMVS), and 338–358 (LASL…MIGV).

It belongs to the 1-acyl-sn-glycerol-3-phosphate acyltransferase family.

The protein resides in the endoplasmic reticulum membrane. It catalyses the reaction a 1-acyl-sn-glycero-3-phosphate + an acyl-CoA = a 1,2-diacyl-sn-glycero-3-phosphate + CoA. The catalysed reaction is (4Z,7Z,10Z,13Z,16Z,19Z)-docosahexaenoyl-CoA + 1-hexadecanoyl-sn-glycero-3-phosphate = 1-hexadecanoyl-2-(4Z,7Z,10Z,13Z,16Z,19Z-docosahexaenoyl)-sn-glycero-3-phosphate + CoA. The enzyme catalyses 1-octadecanoyl-sn-glycero-3-phosphate + (9Z,12Z)-octadecadienoyl-CoA = 1-octadecanoyl-2-(9Z,12Z-octadecadienoyl)-sn-glycero-3-phosphate + CoA. It carries out the reaction 1-octadecanoyl-sn-glycero-3-phosphate + (4Z,7Z,10Z,13Z,16Z,19Z)-docosahexaenoyl-CoA = 1-octadecanoyl-2-(4Z,7Z,10Z,13Z,16Z,19Z-docosahexaenoyl)-sn-glycero-3-phosphate + CoA. It catalyses the reaction (4Z,7Z,10Z,13Z,16Z,19Z)-docosahexaenoyl-CoA + 1-(9Z-octadecenoyl)-sn-glycero-3-phosphate = 1-(9Z-octadecenoyl)-2-(4Z,7Z,10Z,13Z,16Z,19Z-docosahexaenoyl)-sn-glycero-3-phosphate + CoA. It participates in phospholipid metabolism; CDP-diacylglycerol biosynthesis; CDP-diacylglycerol from sn-glycerol 3-phosphate: step 2/3. In terms of biological role, converts 1-acyl-sn-glycerol-3-phosphate (lysophosphatidic acid or LPA) into 1,2-diacyl-sn-glycerol-3-phosphate (phosphatidic acid or PA) by incorporating an acyl moiety at the sn-2 position of the glycerol backbone. Exhibits high acyl-CoA specificity for polyunsaturated fatty acyl-CoA, especially docosahexaenoyl-CoA (22:6-CoA, DHA-CoA). This chain is 1-acyl-sn-glycerol-3-phosphate acyltransferase delta (Agpat4), found in Rattus norvegicus (Rat).